The sequence spans 367 residues: Queuine tRNA-ribosyltransferase (367 aa).

D92 acts as the Proton acceptor in catalysis. Substrate-binding positions include 92-96, D146, Q188, and G215; that span reads DSGGF. The tract at residues 246–252 is RNA binding; sequence GVGTPKD. D265 functions as the Nucleophile in the catalytic mechanism. Zn(2+) contacts are provided by C303, C305, C308, and H334.

This sequence belongs to the queuine tRNA-ribosyltransferase family. In terms of assembly, homodimer. Within each dimer, one monomer is responsible for RNA recognition and catalysis, while the other monomer binds to the replacement base PreQ1. It depends on Zn(2+) as a cofactor.

The enzyme catalyses 7-aminomethyl-7-carbaguanine + guanosine(34) in tRNA = 7-aminomethyl-7-carbaguanosine(34) in tRNA + guanine. Its pathway is tRNA modification; tRNA-queuosine biosynthesis. Catalyzes the base-exchange of a guanine (G) residue with the queuine precursor 7-aminomethyl-7-deazaguanine (PreQ1) at position 34 (anticodon wobble position) in tRNAs with GU(N) anticodons (tRNA-Asp, -Asn, -His and -Tyr). Catalysis occurs through a double-displacement mechanism. The nucleophile active site attacks the C1' of nucleotide 34 to detach the guanine base from the RNA, forming a covalent enzyme-RNA intermediate. The proton acceptor active site deprotonates the incoming PreQ1, allowing a nucleophilic attack on the C1' of the ribose to form the product. After dissociation, two additional enzymatic reactions on the tRNA convert PreQ1 to queuine (Q), resulting in the hypermodified nucleoside queuosine (7-(((4,5-cis-dihydroxy-2-cyclopenten-1-yl)amino)methyl)-7-deazaguanosine). In Francisella tularensis subsp. novicida (strain U112), this protein is Queuine tRNA-ribosyltransferase.